The primary structure comprises 531 residues: Acid-sensing ion channel 3 (531 aa).

Residues M1 to G43 are Cytoplasmic-facing. Residues M44 to A61 traverse the membrane as a helical segment. At E62–Q441 the chain is on the extracellular side. Disulfide bonds link C92/C186, C164/C171, C282/C370, C315/C366, C319/C364, C328/C350, and C330/C342. An N-linked (GlcNAc...) asparagine glycan is attached at N175. The tract at residues A285 to S307 is disordered. A glycan (N-linked (GlcNAc...) asparagine) is linked at N398. A helical membrane pass occupies residues M442–L460. The GAS motif; ion selectivity filter motif lies at G447 to S449. Residues C461–L531 lie on the Cytoplasmic side of the membrane. Positions V528–L531 match the PDZ-binding motif.

The protein belongs to the amiloride-sensitive sodium channel (TC 1.A.6) family. ASIC3 subfamily. In terms of assembly, can form homotrimeric channels. Heterotrimer; forms functional heterotrimers producing channel with different properties. Forms heterotrimers with ASIC2; gives rise to a biphasic current with a sustained current which discriminates poorly between Na(+) and K(+). Interacts with STOM; inhibits ASIC3 acid-evoked current. Interacts with LIN7B (via PDZ domain); increases ASIC3 expression at the plasma membrane. Interacts with MAGI1 (via PDZ domain); probably regulates ASIC3. Interacts with GOPC (via PDZ domain); probably regulates ASIC3. Interacts with DLG4 (via PDZ domain); reduces ASIC3 expression at the plasma membrane. Expressed by sensory neurons. Strongly expressed in brain, spinal cord, lung, lymph nodes, kidney, pituitary, heart and testis.

It is found in the cell membrane. The protein resides in the cytoplasm. The catalysed reaction is Na(+)(in) = Na(+)(out). The enzyme catalyses K(+)(in) = K(+)(out). It carries out the reaction Ca(2+)(in) = Ca(2+)(out). Its activity is regulated as follows. Inhibited by the diuretic drug amiloride. Inhibited by the diuretic drug triamterene. Potentiated by the vertebrate neuropeptide FF (NPFF) and the related FMRFamide. Specifically and reversibly inhibited by the a sea anemone toxin APETx2. Forms pH-gated heterotrimeric sodium channels that act as postsynaptic excitatory receptors in the nervous system. Upon extracellular acidification, these channels generate a biphasic current with a fast inactivating and a slow sustained phase. ASIC3 is more sensitive to protons and gates between closed, open, and desensitized states faster than other ASICs. Displays high selectivity for sodium ions but can also permit the permeation of other cations. As a neuronal acid sensor, probably contributes to mechanoreception, acid nociception, and heat nociception. By forming heterotrimeric channels with ASIC2, generates a biphasic current with a fast inactivating and a slow sustained phase, which in sensory neurons is proposed to mediate the pain induced by acidosis that occurs in ischemic, damaged or inflamed tissues. This Homo sapiens (Human) protein is Acid-sensing ion channel 3.